The primary structure comprises 45 residues: Photosystem II reaction center protein K (45 aa).

The propeptide occupies 1 to 8; it reads MTQIFLIG. A helical transmembrane segment spans residues 20–40; the sequence is IVDVLPIIPVLFLLLAFVWQA.

It belongs to the PsbK family. In terms of assembly, PSII is composed of 1 copy each of membrane proteins PsbA, PsbB, PsbC, PsbD, PsbE, PsbF, PsbH, PsbI, PsbJ, PsbK, PsbL, PsbM, PsbT, PsbX, PsbY, PsbZ, Psb30/Ycf12, at least 3 peripheral proteins of the oxygen-evolving complex and a large number of cofactors. It forms dimeric complexes.

Its subcellular location is the plastid. The protein resides in the chloroplast thylakoid membrane. Functionally, one of the components of the core complex of photosystem II (PSII). PSII is a light-driven water:plastoquinone oxidoreductase that uses light energy to abstract electrons from H(2)O, generating O(2) and a proton gradient subsequently used for ATP formation. It consists of a core antenna complex that captures photons, and an electron transfer chain that converts photonic excitation into a charge separation. In Ostreococcus tauri, this protein is Photosystem II reaction center protein K.